Reading from the N-terminus, the 309-residue chain is 11-beta-hydroxysteroid dehydrogenase-like 3 (309 aa).

A helical; Signal-anchor for type II membrane protein transmembrane segment spans residues 10-30 (LLLPPLTIIFLFLFYPFYLLI). NADP(+)-binding positions include 54-80 (GASSGIGEHVAYEYAKKGAYLALVARR) and aspartate 105. A substrate-binding site is contributed by serine 184. Residue tyrosine 197 is the Proton acceptor of the active site. Residues 197-201 (YAASK) and lysine 201 contribute to the NADP(+) site.

This sequence belongs to the short-chain dehydrogenases/reductases (SDR) family.

It localises to the membrane. The chain is 11-beta-hydroxysteroid dehydrogenase-like 3 (HSD3) from Arabidopsis thaliana (Mouse-ear cress).